The primary structure comprises 137 residues: Basic phospholipase A2 beta-bungarotoxin A1 chain (137 aa).

Residues 1–9 (AVCVSLLGA) form the signal peptide. The propeptide occupies 10-17 (ANIPPHPL). Cystine bridges form between Cys-44–Cys-136, Cys-46–Cys-62, Cys-61–Cys-117, Cys-68–Cys-110, Cys-78–Cys-103, and Cys-96–Cys-108. The Ca(2+) site is built by Tyr-45, Gly-47, and Gly-49. Residue His-65 is part of the active site. Asp-66 provides a ligand contact to Ca(2+). The active site involves Asp-111.

The protein belongs to the phospholipase A2 family. Group I subfamily. D49 sub-subfamily. In terms of assembly, heterodimer; disulfide-linked. The A chain has phospholipase A2 activity and the B chain shows homology with the basic protease inhibitors. Requires Ca(2+) as cofactor. As to expression, expressed by the venom gland.

Its subcellular location is the secreted. It carries out the reaction a 1,2-diacyl-sn-glycero-3-phosphocholine + H2O = a 1-acyl-sn-glycero-3-phosphocholine + a fatty acid + H(+). In terms of biological role, snake venom phospholipase A2 (PLA2) that shows presynaptic neurotoxicity. The A chain has phospholipase activity. PLA2 catalyzes the calcium-dependent hydrolysis of the 2-acyl groups in 3-sn-phosphoglycerides. In Bungarus candidus (Malayan krait), this protein is Basic phospholipase A2 beta-bungarotoxin A1 chain.